The following is a 146-amino-acid chain: uncharacterized protein (146 aa).

Residues 87-121 (SRSHHSTAKSAKSALSSDSGDGSDPDPEPETFPSA) form a disordered region. Residues 94–106 (AKSAKSALSSDSG) show a composition bias toward low complexity.

This is an uncharacterized protein from Escherichia coli (strain K12).